The following is a 1196-amino-acid chain: Homeodomain-interacting protein kinase 2 (1196 aa).

Phosphoserine is present on serine 16. Residue lysine 32 forms a Glycyl lysine isopeptide (Lys-Gly) (interchain with G-Cter in SUMO); alternate linkage. Lysine 32 participates in a covalent cross-link: Glycyl lysine isopeptide (Lys-Gly) (interchain with G-Cter in SUMO2); alternate. The tract at residues 50-69 (VYSQSKNIPPSQPASTTVST) is disordered. The transcriptional corepression stretch occupies residues 97-230 (SASSTSVTGQ…TNEIVAIKIL (134 aa)). Phosphoserine occurs at positions 118 and 135. Position 141 is a phosphothreonine (threonine 141). Positions 189-520 (HEVLCSMTNT…DADKRVTPIE (332 aa)) are interaction with DAXX. Positions 199-527 (YEVLEFLGRG…PIETLNHPFV (329 aa)) constitute a Protein kinase domain. ATP-binding positions include 205-213 (LGRGTFGQV) and lysine 228. A phosphothreonine mark is found at threonine 252 and threonine 273. Aspartate 324 functions as the Proton acceptor in the catalytic mechanism. Residue tyrosine 361 is modified to Phosphotyrosine; by autocatalysis. Position 441 is a phosphoserine (serine 441). 3 positions are modified to phosphothreonine: threonine 482, threonine 517, and threonine 566. Residues 539–844 (AHVKSCFQNM…KENTPPRCAM (306 aa)) form an interaction with SKI and SMAD1 region. The segment at 600 to 800 (SATLSLANPE…MRQQPTSTTS (201 aa)) is interaction with DAZAP2. A phosphoserine mark is found at serine 634 and serine 668. Threonine 687 carries the post-translational modification Phosphothreonine. The segment at 752–897 (RNTHAHGSHY…ITISSDTDEE (146 aa)) is interaction with POU4F1. An interaction with CTBP1 region spans residues 774-876 (HVTLPAAQPL…TRERQRQTIV (103 aa)). Residues 787–897 (VAHVMRQQPT…ITISSDTDEE (111 aa)) form an interaction with HMGA1 region. Disordered regions lie at residues 792–847 (RQQP…MVHS) and 891–963 (SSDT…CTGN). Over residues 793 to 829 (QQPTSTTSSRKSKQHQSSVRNVSTCEVTSSQAISSPQ) the composition is skewed to polar residues. A Nuclear localization signal 1 (NLS1) motif is present at residues 802–805 (RKSK). 2 positions are modified to phosphoserine: serine 815 and serine 827. The Nuclear localization signal 2 (NLS2) motif lies at 832–835 (KRVK). The interval 839-934 (PPRCAMVHSS…PYSDSSSNTS (96 aa)) is interaction with TP53 and TP73. Residues 873 to 907 (QTIVIPDTPSPTVSVITISSDTDEEEEQKHAPTST) are interaction with UBE2I. The localization to nuclear speckles stretch occupies residues 873–980 (QTIVIPDTPS…PLKTQASEVL (108 aa)). Residues 873–980 (QTIVIPDTPS…PLKTQASEVL (108 aa)) form a required for localization to nuclear speckles region. The SUMO interaction motifs (SIM); required for nuclear localization and kinase activity stretch occupies residues 884–908 (TVSVITISSDTDEEEEQKHAPTSTV). A compositionally biased stretch (low complexity) spans 923-937 (DSPYSDSSSNTSPYS). Serine 934 bears the Phosphoserine mark. The segment at 935 to 1050 (PYSVQQRTGH…LSQAQQHMAA (116 aa)) is interaction with AXIN1. Polar residues predominate over residues 938–951 (VQQRTGHNGTNTLD). Glycyl lysine isopeptide (Lys-Gly) (interchain with G-Cter in SUMO2) cross-links involve residues lysine 953 and lysine 973. The autoinhibitory domain (AID) stretch occupies residues 984-1196 (DSLGPAISAS…PAKVNQYPYI (213 aa)). 5 positions are modified to phosphoserine: serine 991, serine 993, serine 1042, serine 1153, and serine 1186. The span at 991-1046 (SASHHSSSFKSKSSSTVTSTSGHSSGSSSGAIAYRQQRPGPHFQQQQPLNLSQAQQ) shows a compositional bias: low complexity. Residues 991–1058 (SASHHSSSFK…AADRTGSHRR (68 aa)) are disordered. Residue lysine 1189 forms a Glycyl lysine isopeptide (Lys-Gly) (interchain with G-Cter in SUMO) linkage.

This sequence belongs to the protein kinase superfamily. CMGC Ser/Thr protein kinase family. HIPK subfamily. As to quaternary structure, interacts with CREB1, SIAH1, WSB1, CBX4, TRADD, p53/TP53, TP73, TP63, CREBBP, DAXX, P53DINP1, SKI, SMAD1, SMAD2 and SMAD3, but not SMAD4. Interacts with SP100; positively regulates TP53-dependent transcription. Interacts with ATF1, PML, RUNX1, EP300, NKX1-2, NKX2-5, UBE2I, HMGA1, CTBP1, AXIN1, NLK, MYB, POU4F1, POU4F2, POU4F3, UBE2I, UBL1 and ZBTB4. Probably part of a complex consisting of p53/TP53, HIPK2 and AXIN1. Interacts with DAZAP2; the interaction results in phosphorylation of DAZAP2 which causes localization of DAZAP2 to the nucleus, reduces interaction of DAZAP2 with HIPK2 and prevents DAZAP2-dependent degradation of HIPK2. Interacts with SIAH1; the interaction is promoted by DAZAP2 and results in SIAH1-mediated ubiquitination and subsequent proteasomal degradation of HIPK2. In terms of assembly, interacts with SPN/CD43 cytoplasmic tail. Post-translationally, sumoylated. When conjugated it is directed to nuclear speckles. Desumoylated by SENP1. Sumoylation on Lys-32 is promoted by the E3 SUMO-protein ligase CBX4. In terms of processing, autophosphorylation at Tyr-361 in the activation loop activates the kinase and promotes nuclear localization. Ubiquitinated by FBXO3, WSB1 and SIAH1, leading to rapid proteasome-dependent degradation. The degradation mediated by FBXO3, but not ubiquitination, is prevented in the presence of PML. The degradation mediated by WSB1 and SIAH1 is reversibly reduced upon DNA damage. Post-translationally, cleaved at Asp-923 and Asp-984 by CASP6 in a p53/TP53-dependent manner. The cleaved form lacks the autoinhibitory C-terminal domain (AID), resulting in a hyperactive kinase, which potentiates p53/TP53 Ser-46 phosphorylation and subsequent activation of the cell death machinery. Ubiquitous. Abundant in muscle, heart, small intestine, stomach, kidney and brain; and low in testis, skin and lung.

The protein resides in the nucleus. It localises to the PML body. It is found in the cytoplasm. The enzyme catalyses L-seryl-[protein] + ATP = O-phospho-L-seryl-[protein] + ADP + H(+). The catalysed reaction is L-threonyl-[protein] + ATP = O-phospho-L-threonyl-[protein] + ADP + H(+). In terms of biological role, serine/threonine-protein kinase involved in transcription regulation, p53/TP53-mediated cellular apoptosis and regulation of the cell cycle. Acts as a corepressor of several transcription factors, including SMAD1 and POU4F1/Brn3a and probably NK homeodomain transcription factors. Phosphorylates PDX1, ATF1, PML, p53/TP53, CREB1, CTBP1, CBX4, RUNX1, EP300, CTNNB1, HMGA1, ZBTB4 and DAZAP2. Inhibits cell growth and promotes apoptosis through the activation of p53/TP53 both at the transcription level and at the protein level (by phosphorylation and indirect acetylation). The phosphorylation of p53/TP53 may be mediated by a p53/TP53-HIPK2-AXIN1 complex. Involved in the response to hypoxia by acting as a transcriptional co-suppressor of HIF1A. Mediates transcriptional activation of TP73. In response to TGFB, cooperates with DAXX to activate JNK. Negative regulator through phosphorylation and subsequent proteasomal degradation of CTNNB1 and the antiapoptotic factor CTBP1. In the Wnt/beta-catenin signaling pathway acts as an intermediate kinase between MAP3K7/TAK1 and NLK to promote the proteasomal degradation of MYB. Phosphorylates CBX4 upon DNA damage and promotes its E3 SUMO-protein ligase activity. Activates CREB1 and ATF1 transcription factors by phosphorylation in response to genotoxic stress. In response to DNA damage, stabilizes PML by phosphorylation. PML, HIPK2 and FBXO3 may act synergically to activate p53/TP53-dependent transactivation. Promotes angiogenesis, and is involved in erythroid differentiation, especially during fetal liver erythropoiesis. Phosphorylation of RUNX1 and EP300 stimulates EP300 transcription regulation activity. Triggers ZBTB4 protein degradation in response to DNA damage. In response to DNA damage, phosphorylates DAZAP2 which localizes DAZAP2 to the nucleus, reduces interaction of DAZAP2 with HIPK2 and prevents DAZAP2-dependent ubiquitination of HIPK2 by E3 ubiquitin-protein ligase SIAH1 and subsequent proteasomal degradation. Modulates HMGA1 DNA-binding affinity. In response to high glucose, triggers phosphorylation-mediated subnuclear localization shifting of PDX1. Involved in the regulation of eye size, lens formation and retinal lamination during late embryogenesis. In Mus musculus (Mouse), this protein is Homeodomain-interacting protein kinase 2 (Hipk2).